A 177-amino-acid chain; its full sequence is Large ribosomal subunit protein uL6 (177 aa).

Belongs to the universal ribosomal protein uL6 family. In terms of assembly, part of the 50S ribosomal subunit.

Its function is as follows. This protein binds to the 23S rRNA, and is important in its secondary structure. It is located near the subunit interface in the base of the L7/L12 stalk, and near the tRNA binding site of the peptidyltransferase center. The chain is Large ribosomal subunit protein uL6 from Rickettsia peacockii (strain Rustic).